The chain runs to 207 residues: Guanylate kinase (207 aa).

The Guanylate kinase-like domain maps to 4 to 184 (GTLYIVSAPS…ALLDLKTIIR (181 aa)). 11–18 (APSGAGKS) contributes to the ATP binding site.

The protein belongs to the guanylate kinase family.

The protein resides in the cytoplasm. It catalyses the reaction GMP + ATP = GDP + ADP. Its function is as follows. Essential for recycling GMP and indirectly, cGMP. The polypeptide is Guanylate kinase (Sodalis glossinidius (strain morsitans)).